Here is a 202-residue protein sequence, read N- to C-terminus: Probable nicotinate-nucleotide adenylyltransferase (202 aa).

Belongs to the NadD family.

The catalysed reaction is nicotinate beta-D-ribonucleotide + ATP + H(+) = deamido-NAD(+) + diphosphate. It functions in the pathway cofactor biosynthesis; NAD(+) biosynthesis; deamido-NAD(+) from nicotinate D-ribonucleotide: step 1/1. Its function is as follows. Catalyzes the reversible adenylation of nicotinate mononucleotide (NaMN) to nicotinic acid adenine dinucleotide (NaAD). The protein is Probable nicotinate-nucleotide adenylyltransferase of Clostridium perfringens (strain 13 / Type A).